The sequence spans 331 residues: Zinc finger protein 660 (331 aa).

Over residues 1 to 12 (MRRKTRNFKHKT) the composition is skewed to basic residues. Positions 1–35 (MRRKTRNFKHKTVKDNKVLTEGSDQESEKDNSQCC) are disordered. A Phosphoserine modification is found at Ser23. C2H2-type zinc fingers lie at residues 50-72 (YVCTECGKAFSQSANLTVHERIH), 78-100 (YKCKECGKAFSHSSNLVVHRRIH), 106-128 (YTCSECGKSFSGKSHLIRHQGIH), 134-156 (YECKECGKAFSRSSGLISHHRVH), 162-184 (YSCIECGKAFSRSSNLTQHQRMH), 190-212 (YKCKECGKTCGSNTKIMDHQRIH), 218-240 (YECDECGKTFILRKTLNEHQRLH), 246-268 (YKCNECGKAFTSNRNLVDHQRVH), 274-296 (YKCNECGKTFRQTSQVILHLRTH), and 302-324 (YKCSECGKAYRYSSQLIQHQRKH).

Belongs to the krueppel C2H2-type zinc-finger protein family.

It is found in the nucleus. Its function is as follows. May be involved in transcriptional regulation. This chain is Zinc finger protein 660 (ZNF660), found in Homo sapiens (Human).